Here is a 537-residue protein sequence, read N- to C-terminus: Carboxypeptidase Y homolog A (537 aa).

The signal sequence occupies residues 1-17; it reads MRLSTSALVLGAASSAV. Residues 18–124 constitute a propeptide that is removed on maturation; sequence AFDQKVLGDL…RLDNYNLRAK (107 aa). Disulfide bonds link C178/C418, C312/C326, C336/C359, C343/C352, and C381/C388. N209 carries an N-linked (GlcNAc...) asparagine glycan. Residue S265 is part of the active site. D457 is a catalytic residue. The N-linked (GlcNAc...) asparagine glycan is linked to N503. H514 is a catalytic residue.

This sequence belongs to the peptidase S10 family.

Its subcellular location is the vacuole. The catalysed reaction is Release of a C-terminal amino acid with broad specificity.. In terms of biological role, vacuolar carboxypeptidase involved in degradation of small peptides. Digests preferentially peptides containing an aliphatic or hydrophobic residue in P1' position, as well as methionine, leucine or phenylalanine in P1 position of ester substrate. The sequence is that of Carboxypeptidase Y homolog A (CPYA) from Fusarium vanettenii (strain ATCC MYA-4622 / CBS 123669 / FGSC 9596 / NRRL 45880 / 77-13-4) (Fusarium solani subsp. pisi).